The primary structure comprises 523 residues: MAINQAHVHPHYTLPGVMHYLQTEFTKNERDRITWELERSEMKARIAELEGENRDLKHQLNQIQSKAVSPEGEKEEKHVPDSLLQSKLAVQENVKEIIYLLKGPNTVNQLESLNSREAGSELHDLEKLNVNTPKEEGSAKTNGMDILNNALLDTKPNPKQGPSESPSPTKVKSLFSTANKRENNETISKIHSELSKVDIISSYGDCMALYDADTKSLEIHQVDANLNSKLLKKISLGQDSDIMKFFWVSTSKLLVIEKSFHLKLFSISSASLISDVDLLQDSEQPFSSSDIINIDFKNKWLLIASKNKSQIRIWELDNIEAPEDVPINIKETYEITHDNDDDDSNDSTNILDCILGITEKSLILLSSNPYQLTIYDFEGKLLQKIDLKIDTILSGKPEEEGYHLFLDRKTSKLLIQLSNERLLVYSFDKKKVVLKEQLTPSSTLPIQLDLNDSIITVSYSNGDFEFRNLENLKPSIDEFVVADINFSERKEPVVFSSNLIVDSTPVLITVNKNNEVLLHKIKI.

Residues 26–76 (TKNERDRITWELERSEMKARIAELEGENRDLKHQLNQIQSKAVSPEGEKEE) adopt a coiled-coil conformation. The interval 61 to 80 (NQIQSKAVSPEGEKEEKHVP) is disordered. Residues 71-80 (EGEKEEKHVP) are compositionally biased toward basic and acidic residues. At Ser-115 the chain carries Phosphoserine. The residue at position 132 (Thr-132) is a Phosphothreonine. Positions 150–171 (ALLDTKPNPKQGPSESPSPTKV) are disordered. Residues 160-171 (QGPSESPSPTKV) are compositionally biased toward polar residues.

As to quaternary structure, component of a complex at least composed of FAR3, FAR7, FAR8, FAR10, FAR11 and VPS64.

Its subcellular location is the cytoplasm. The protein resides in the endoplasmic reticulum. In terms of biological role, participates in the control of the reentry into the cell cycle following pheromone treatment. This is Factor arrest protein 8 (FAR8) from Saccharomyces cerevisiae (strain ATCC 204508 / S288c) (Baker's yeast).